Reading from the N-terminus, the 473-residue chain is 6-phosphogluconate dehydrogenase, decarboxylating (473 aa).

Residues 10-15 (GMAVMG), 33-35 (NRT), 74-76 (VKS), and N102 each bind NADP(+). Residues N102 and 128-130 (SGG) contribute to the substrate site. K182 functions as the Proton acceptor in the catalytic mechanism. Position 185-186 (185-186 (HN)) interacts with substrate. The active-site Proton donor is E189. 5 residues coordinate substrate: Y190, K260, R287, R446, and H452.

The protein belongs to the 6-phosphogluconate dehydrogenase family. Homodimer.

The catalysed reaction is 6-phospho-D-gluconate + NADP(+) = D-ribulose 5-phosphate + CO2 + NADPH. It functions in the pathway carbohydrate degradation; pentose phosphate pathway; D-ribulose 5-phosphate from D-glucose 6-phosphate (oxidative stage): step 3/3. Functionally, catalyzes the oxidative decarboxylation of 6-phosphogluconate to ribulose 5-phosphate and CO(2), with concomitant reduction of NADP to NADPH. The protein is 6-phosphogluconate dehydrogenase, decarboxylating (gnd) of Buchnera aphidicola subsp. Schizaphis graminum (strain Sg).